The sequence spans 461 residues: ATP synthase subunit beta 2 (461 aa).

ATP is bound at residue 151–158; that stretch reads GGAGVGKT.

This sequence belongs to the ATPase alpha/beta chains family. As to quaternary structure, F-type ATPases have 2 components, CF(1) - the catalytic core - and CF(0) - the membrane proton channel. CF(1) has five subunits: alpha(3), beta(3), gamma(1), delta(1), epsilon(1). CF(0) has three main subunits: a(1), b(2) and c(9-12). The alpha and beta chains form an alternating ring which encloses part of the gamma chain. CF(1) is attached to CF(0) by a central stalk formed by the gamma and epsilon chains, while a peripheral stalk is formed by the delta and b chains.

Its subcellular location is the cell inner membrane. It catalyses the reaction ATP + H2O + 4 H(+)(in) = ADP + phosphate + 5 H(+)(out). Its function is as follows. Produces ATP from ADP in the presence of a proton gradient across the membrane. The catalytic sites are hosted primarily by the beta subunits. This Vibrio campbellii (strain ATCC BAA-1116) protein is ATP synthase subunit beta 2.